Reading from the N-terminus, the 264-residue chain is MILLIDSGNSRLKVGWLDNGAREPAAVAFDNLDPHALGDWLGTLSRKPTLALGVNVAGAERGEGIRAALAGHGCPVHWITSRPQLLGLRNGYTQPAQLGADRLVSLLGVRSRLAQTHPPFVLASFGTATTIDTVGPDNAFAGGLILPGPALMRSSLARGTANLPLADGPVVDFPVDTHQAIASGIAAAQAGAVVRQWLAACRHYGCAADIYVAGGGWPEVQQETERLLAQAAAIAGAPPLPAYLDRPVLDGLALLAAQPDPQSL.

ATP is bound at residue 6-13 (DSGNSRLK). Substrate-binding positions include Tyr92 and 99 to 102 (GADR). The active-site Proton acceptor is the Asp101. Thr127 contacts ATP. Substrate is bound at residue Thr177.

It belongs to the type III pantothenate kinase family. Homodimer. Requires NH4(+) as cofactor. The cofactor is K(+).

It localises to the cytoplasm. The enzyme catalyses (R)-pantothenate + ATP = (R)-4'-phosphopantothenate + ADP + H(+). It functions in the pathway cofactor biosynthesis; coenzyme A biosynthesis; CoA from (R)-pantothenate: step 1/5. Catalyzes the phosphorylation of pantothenate (Pan), the first step in CoA biosynthesis. In Bordetella petrii (strain ATCC BAA-461 / DSM 12804 / CCUG 43448), this protein is Type III pantothenate kinase.